The primary structure comprises 450 residues: Neuraminidase (450 aa).

At 1–6 (MNPNQK) the chain is on the intravirion side. Residues 7–27 (IITIGSICMVVGIISLMLQIG) form a helical membrane-spanning segment. The involved in apical transport and lipid raft association stretch occupies residues 11–33 (GSICMVVGIISLMLQIGNIISVW). At 28-450 (NIISVWVSHI…GAELPFTIDK (423 aa)) the chain is on the virion surface side. The interval 36–71 (HIIQTWHPNQPEPCNQSINFYTEQAAASVTLAGNSS) is hypervariable stalk region. 2 N-linked (GlcNAc...) asparagine; by host glycosylation sites follow: Asn50 and Asn69. A head of neuraminidase region spans residues 72-450 (LCPISGWAIY…GAELPFTIDK (379 aa)). Cystine bridges form between Cys73–Cys398, Cys105–Cys110, Cys165–Cys212, Cys214–Cys219, Cys260–Cys273, Cys262–Cys271, Cys299–Cys316, and Cys402–Cys427. Arg99 lines the substrate pocket. Asn127 is a glycosylation site (N-linked (GlcNAc...) asparagine; by host). Catalysis depends on Asp132, which acts as the Proton donor/acceptor. Arg133 is a substrate binding site. Residue Asn216 is glycosylated (N-linked (GlcNAc...) asparagine; by host). 258–259 (EE) provides a ligand contact to substrate. Residue Arg274 coordinates substrate. Ca(2+) is bound by residues Asp275, Gly279, and Asp305. Arg349 is a substrate binding site. Residue Tyr383 is the Nucleophile of the active site.

The protein belongs to the glycosyl hydrolase 34 family. Homotetramer. Requires Ca(2+) as cofactor. N-glycosylated.

The protein resides in the virion membrane. It is found in the host apical cell membrane. The enzyme catalyses Hydrolysis of alpha-(2-&gt;3)-, alpha-(2-&gt;6)-, alpha-(2-&gt;8)- glycosidic linkages of terminal sialic acid residues in oligosaccharides, glycoproteins, glycolipids, colominic acid and synthetic substrates.. Inhibited by the neuraminidase inhibitors zanamivir (Relenza) and oseltamivir (Tamiflu). These drugs interfere with the release of progeny virus from infected cells and are effective against all influenza strains. Resistance to neuraminidase inhibitors is quite rare. In terms of biological role, catalyzes the removal of terminal sialic acid residues from viral and cellular glycoconjugates. Cleaves off the terminal sialic acids on the glycosylated HA during virus budding to facilitate virus release. Additionally helps virus spread through the circulation by further removing sialic acids from the cell surface. These cleavages prevent self-aggregation and ensure the efficient spread of the progeny virus from cell to cell. Otherwise, infection would be limited to one round of replication. Described as a receptor-destroying enzyme because it cleaves a terminal sialic acid from the cellular receptors. May facilitate viral invasion of the upper airways by cleaving the sialic acid moieties on the mucin of the airway epithelial cells. Likely to plays a role in the budding process through its association with lipid rafts during intracellular transport. May additionally display a raft-association independent effect on budding. Plays a role in the determination of host range restriction on replication and virulence. Sialidase activity in late endosome/lysosome traffic seems to enhance virus replication. The sequence is that of Neuraminidase from Aves (Cat).